The sequence spans 188 residues: dCTP deaminase (188 aa).

Residues 111-116 (KSTYAR), 135-137 (TLE), Gln156, Tyr170, and Gln180 contribute to the dCTP site. The active-site Proton donor/acceptor is Glu137.

It belongs to the dCTP deaminase family. In terms of assembly, homotrimer.

The enzyme catalyses dCTP + H2O + H(+) = dUTP + NH4(+). Its pathway is pyrimidine metabolism; dUMP biosynthesis; dUMP from dCTP (dUTP route): step 1/2. Functionally, catalyzes the deamination of dCTP to dUTP. In Pseudomonas putida (strain ATCC 700007 / DSM 6899 / JCM 31910 / BCRC 17059 / LMG 24140 / F1), this protein is dCTP deaminase.